Reading from the N-terminus, the 311-residue chain is Linearmycin resistance ATP-binding protein LnrL (311 aa).

An ABC transporter domain is found at 2-232; it reads LQAENIKKAY…LGGDTIIQLT (231 aa). 34-41 is a binding site for ATP; the sequence is GPNGAGKS.

The protein belongs to the ABC transporter superfamily. The complex is composed of two ATP-binding proteins (LnrL) and two transmembrane proteins (LnrM and LnrN).

Functionally, required for resistance to linearmycins, a family of antibiotic-specialized metabolites produced by some streptomycetes. Part of the ABC transporter complex LnrLMN that probably facilitates linearmycin removal from the membrane. Responsible for energy coupling to the transport system. Also mediates KinC-dependent biofilm morphology. This chain is Linearmycin resistance ATP-binding protein LnrL, found in Bacillus subtilis (strain 168).